The chain runs to 408 residues: Imidazolonepropionase (408 aa).

Fe(3+) contacts are provided by His-73 and His-75. Residues His-73 and His-75 each contribute to the Zn(2+) site. 4-imidazolone-5-propanoate is bound by residues Arg-82, Tyr-145, and His-178. Tyr-145 contacts N-formimidoyl-L-glutamate. Fe(3+) is bound at residue His-243. His-243 provides a ligand contact to Zn(2+). Residue Gln-246 coordinates 4-imidazolone-5-propanoate. Asp-318 contacts Fe(3+). A Zn(2+)-binding site is contributed by Asp-318. 2 residues coordinate N-formimidoyl-L-glutamate: Asn-320 and Gly-322. Residue Ser-323 coordinates 4-imidazolone-5-propanoate.

This sequence belongs to the metallo-dependent hydrolases superfamily. HutI family. Requires Zn(2+) as cofactor. Fe(3+) is required as a cofactor.

The protein resides in the cytoplasm. The catalysed reaction is 4-imidazolone-5-propanoate + H2O = N-formimidoyl-L-glutamate. It functions in the pathway amino-acid degradation; L-histidine degradation into L-glutamate; N-formimidoyl-L-glutamate from L-histidine: step 3/3. Its function is as follows. Catalyzes the hydrolytic cleavage of the carbon-nitrogen bond in imidazolone-5-propanoate to yield N-formimidoyl-L-glutamate. It is the third step in the universal histidine degradation pathway. This Shewanella woodyi (strain ATCC 51908 / MS32) protein is Imidazolonepropionase.